Here is a 270-residue protein sequence, read N- to C-terminus: Phosphatidylglycerol--prolipoprotein diacylglyceryl transferase (270 aa).

The next 4 helical transmembrane spans lie at F19–A39, L56–E76, Q92–A112, and G116–I136. R138 provides a ligand contact to a 1,2-diacyl-sn-glycero-3-phospho-(1'-sn-glycerol). The next 3 helical transmembrane spans lie at H178–L198, G206–L226, and L236–V256.

The protein belongs to the Lgt family.

Its subcellular location is the cell membrane. The enzyme catalyses L-cysteinyl-[prolipoprotein] + a 1,2-diacyl-sn-glycero-3-phospho-(1'-sn-glycerol) = an S-1,2-diacyl-sn-glyceryl-L-cysteinyl-[prolipoprotein] + sn-glycerol 1-phosphate + H(+). It participates in protein modification; lipoprotein biosynthesis (diacylglyceryl transfer). Catalyzes the transfer of the diacylglyceryl group from phosphatidylglycerol to the sulfhydryl group of the N-terminal cysteine of a prolipoprotein, the first step in the formation of mature lipoproteins. The sequence is that of Phosphatidylglycerol--prolipoprotein diacylglyceryl transferase from Bacillus anthracis (strain A0248).